We begin with the raw amino-acid sequence, 274 residues long: Trehalose transport system permease protein SugB (274 aa).

The next 6 membrane-spanning stretches (helical) occupy residues tyrosine 8–phenylalanine 28, isoleucine 70–alanine 90, leucine 102–phenylalanine 122, leucine 137–phenylalanine 157, valine 182–alanine 202, and glycine 239–phenylalanine 259. In terms of domain architecture, ABC transmembrane type-1 spans leucine 66–phenylalanine 259.

The protein belongs to the binding-protein-dependent transport system permease family. As to quaternary structure, the complex is composed of two ATP-binding proteins (SugC), two transmembrane proteins (Suga and SugB) and a solute-binding protein (LpqY).

Its subcellular location is the cell inner membrane. Part of the ABC transporter complex LpqY-SugA-SugB-SugC, which is highly specific for uptake of trehalose. Involved in the recycling of extracellular trehalose released from trehalose-containing molecules synthesized by M.tuberculosis. Trehalose uptake is essential for virulence. Probably responsible for the translocation of the substrate across the membrane. The sequence is that of Trehalose transport system permease protein SugB (sugB) from Mycobacterium tuberculosis (strain CDC 1551 / Oshkosh).